The following is a 427-amino-acid chain: Peptidase B (427 aa).

Mn(2+)-binding residues include Lys-195 and Asp-200. Residue Lys-207 is part of the active site. Mn(2+) is bound by residues Asp-218, Asp-277, and Glu-279. Residue Arg-281 is part of the active site.

The protein belongs to the peptidase M17 family. In terms of assembly, homohexamer. Mn(2+) is required as a cofactor.

The protein resides in the cytoplasm. It carries out the reaction Release of an N-terminal amino acid, Xaa, from a peptide or arylamide. Xaa is preferably Glu or Asp but may be other amino acids, including Leu, Met, His, Cys and Gln.. In terms of biological role, probably plays an important role in intracellular peptide degradation. This is Peptidase B from Escherichia coli (strain K12 / MC4100 / BW2952).